The chain runs to 472 residues: Siroheme synthase 1 (472 aa).

The segment at 1–203 is precorrin-2 dehydrogenase /sirohydrochlorin ferrochelatase; that stretch reads MDYLPLFADL…GQLAQAEEEL (203 aa). NAD(+) contacts are provided by residues 22–23 and 43–44; these read EV and QT. Residue Ser-128 is modified to Phosphoserine. The tract at residues 215–472 is uroporphyrinogen-III C-methyltransferase; that stretch reads GEVALVGAGP…AISPSVVNLA (258 aa). Pro-224 contacts S-adenosyl-L-methionine. Asp-247 acts as the Proton acceptor in catalysis. The active-site Proton donor is Lys-269. S-adenosyl-L-methionine-binding positions include 300–302, Ile-305, 330–331, Met-382, and Gly-411; these read GGD and TA.

The protein in the N-terminal section; belongs to the precorrin-2 dehydrogenase / sirohydrochlorin ferrochelatase family. This sequence in the C-terminal section; belongs to the precorrin methyltransferase family.

It catalyses the reaction uroporphyrinogen III + 2 S-adenosyl-L-methionine = precorrin-2 + 2 S-adenosyl-L-homocysteine + H(+). The catalysed reaction is precorrin-2 + NAD(+) = sirohydrochlorin + NADH + 2 H(+). The enzyme catalyses siroheme + 2 H(+) = sirohydrochlorin + Fe(2+). Its pathway is cofactor biosynthesis; adenosylcobalamin biosynthesis; precorrin-2 from uroporphyrinogen III: step 1/1. It participates in cofactor biosynthesis; adenosylcobalamin biosynthesis; sirohydrochlorin from precorrin-2: step 1/1. The protein operates within porphyrin-containing compound metabolism; siroheme biosynthesis; precorrin-2 from uroporphyrinogen III: step 1/1. It functions in the pathway porphyrin-containing compound metabolism; siroheme biosynthesis; siroheme from sirohydrochlorin: step 1/1. Its pathway is porphyrin-containing compound metabolism; siroheme biosynthesis; sirohydrochlorin from precorrin-2: step 1/1. Multifunctional enzyme that catalyzes the SAM-dependent methylations of uroporphyrinogen III at position C-2 and C-7 to form precorrin-2 via precorrin-1. Then it catalyzes the NAD-dependent ring dehydrogenation of precorrin-2 to yield sirohydrochlorin. Finally, it catalyzes the ferrochelation of sirohydrochlorin to yield siroheme. This Yersinia enterocolitica serotype O:8 / biotype 1B (strain NCTC 13174 / 8081) protein is Siroheme synthase 1.